A 328-amino-acid chain; its full sequence is Formimidoylglutamase (328 aa).

The Mn(2+) site is built by His133, Asp159, His161, Asp163, Asp253, and Asp255.

This sequence belongs to the arginase family. The cofactor is Mn(2+).

It carries out the reaction N-formimidoyl-L-glutamate + H2O = formamide + L-glutamate. It functions in the pathway amino-acid degradation; L-histidine degradation into L-glutamate; L-glutamate from N-formimidoyl-L-glutamate (hydrolase route): step 1/1. In terms of biological role, catalyzes the conversion of N-formimidoyl-L-glutamate to L-glutamate and formamide. This Streptococcus pyogenes serotype M1 protein is Formimidoylglutamase.